Consider the following 358-residue polypeptide: MRLIIAGGGTGGHLFPGIAVADEFLARSPENEVLFVGTERGIEARLLPKLGYKLALISASGMKGMGTIKKIMSAGRLLYGYSQSRKILKEFRPDLVLGVGGYASAPIVLAARGMGIRRFIHEQNAFPGLTNKVLGRFVDGVFISMPEAESFFPKEMTQMTGNPIRKEILWGFQERVRSIGDTFSILVFGGSAGAQRVNSALLEALPHLEGVKGKLRITHQTGEKDAARVREGYQAQGFQAQVLSFIDDMSAAYGAADLVVCRAGATTIAEVTACGKGCIFIPFPYAADDHQRKNAESLVHKNAGVMILEEDLTGERLAAKILELMEHPAELAEIEKNARALAQLDAAQAIVSAMVSKN.

UDP-N-acetyl-alpha-D-glucosamine contacts are provided by residues threonine 10–glycine 12, asparagine 124, arginine 165, serine 191, isoleucine 246, and glutamine 291.

The protein belongs to the glycosyltransferase 28 family. MurG subfamily.

Its subcellular location is the cell inner membrane. It catalyses the reaction di-trans,octa-cis-undecaprenyl diphospho-N-acetyl-alpha-D-muramoyl-L-alanyl-D-glutamyl-meso-2,6-diaminopimeloyl-D-alanyl-D-alanine + UDP-N-acetyl-alpha-D-glucosamine = di-trans,octa-cis-undecaprenyl diphospho-[N-acetyl-alpha-D-glucosaminyl-(1-&gt;4)]-N-acetyl-alpha-D-muramoyl-L-alanyl-D-glutamyl-meso-2,6-diaminopimeloyl-D-alanyl-D-alanine + UDP + H(+). It participates in cell wall biogenesis; peptidoglycan biosynthesis. Its function is as follows. Cell wall formation. Catalyzes the transfer of a GlcNAc subunit on undecaprenyl-pyrophosphoryl-MurNAc-pentapeptide (lipid intermediate I) to form undecaprenyl-pyrophosphoryl-MurNAc-(pentapeptide)GlcNAc (lipid intermediate II). The polypeptide is UDP-N-acetylglucosamine--N-acetylmuramyl-(pentapeptide) pyrophosphoryl-undecaprenol N-acetylglucosamine transferase (Citrifermentans bemidjiense (strain ATCC BAA-1014 / DSM 16622 / JCM 12645 / Bem) (Geobacter bemidjiensis)).